We begin with the raw amino-acid sequence, 223 residues long: UPF0441 protein KPN78578_33850 (223 aa).

A disordered region spans residues 165–223 (SYGAAQPGRTMNVPKTAMAPKPATTTTVTRGGFGESVAKQSTMQRSAAGSTSSSRSMGG). Composition is skewed to low complexity over residues 177-193 (VPKTAMAPKPATTTTVT) and 209-223 (RSAAGSTSSSRSMGG).

This sequence belongs to the UPF0441 family.

This Klebsiella pneumoniae subsp. pneumoniae (strain ATCC 700721 / MGH 78578) protein is UPF0441 protein KPN78578_33850.